The following is a 238-amino-acid chain: Fatty acid metabolism regulator protein (238 aa).

Positions 6-74 (KGPASFAEKY…HGKPTRVNNF (69 aa)) constitute an HTH gntR-type domain. A DNA-binding region (H-T-H motif) is located at residues 34 to 53 (ERELSELIGVTRTTLREVLQ).

In terms of assembly, homodimer.

The protein localises to the cytoplasm. Multifunctional regulator of fatty acid metabolism. This is Fatty acid metabolism regulator protein from Shewanella baltica (strain OS223).